We begin with the raw amino-acid sequence, 79 residues long: Small ribosomal subunit protein bS16 (79 aa).

This sequence belongs to the bacterial ribosomal protein bS16 family.

This is Small ribosomal subunit protein bS16 from Desulfovibrio desulfuricans (strain ATCC 27774 / DSM 6949 / MB).